The chain runs to 428 residues: Serine--tRNA ligase (428 aa).

Residue 231–233 (TAE) coordinates L-serine. ATP is bound at residue 262-264 (RSE). Position 285 (E285) interacts with L-serine. 349–352 (EISS) is an ATP binding site. Residue S385 participates in L-serine binding.

This sequence belongs to the class-II aminoacyl-tRNA synthetase family. Type-1 seryl-tRNA synthetase subfamily. As to quaternary structure, homodimer. The tRNA molecule binds across the dimer.

It localises to the cytoplasm. It carries out the reaction tRNA(Ser) + L-serine + ATP = L-seryl-tRNA(Ser) + AMP + diphosphate + H(+). The enzyme catalyses tRNA(Sec) + L-serine + ATP = L-seryl-tRNA(Sec) + AMP + diphosphate + H(+). The protein operates within aminoacyl-tRNA biosynthesis; selenocysteinyl-tRNA(Sec) biosynthesis; L-seryl-tRNA(Sec) from L-serine and tRNA(Sec): step 1/1. Catalyzes the attachment of serine to tRNA(Ser). Is also able to aminoacylate tRNA(Sec) with serine, to form the misacylated tRNA L-seryl-tRNA(Sec), which will be further converted into selenocysteinyl-tRNA(Sec). The protein is Serine--tRNA ligase of Staphylococcus haemolyticus (strain JCSC1435).